Consider the following 453-residue polypeptide: tRNA modification GTPase MnmE (453 aa).

Residues Arg22, Glu79, and Lys119 each contribute to the (6S)-5-formyl-5,6,7,8-tetrahydrofolate site. The 162-residue stretch at 215–376 (GMKVVIAGRP…LKQHLKSLMG (162 aa)) folds into the TrmE-type G domain. Position 225 (Asn225) interacts with K(+). Residues 225 to 230 (NAGKSS), 244 to 250 (TEIAGTT), 269 to 272 (DTAG), and 334 to 337 (NKAD) contribute to the GTP site. Ser229 is a Mg(2+) binding site. Residues Thr244, Ile246, and Thr249 each contribute to the K(+) site. Thr250 contributes to the Mg(2+) binding site. Lys453 lines the (6S)-5-formyl-5,6,7,8-tetrahydrofolate pocket.

Belongs to the TRAFAC class TrmE-Era-EngA-EngB-Septin-like GTPase superfamily. TrmE GTPase family. In terms of assembly, homodimer. Heterotetramer of two MnmE and two MnmG subunits. The cofactor is K(+).

It localises to the cytoplasm. Exhibits a very high intrinsic GTPase hydrolysis rate. Involved in the addition of a carboxymethylaminomethyl (cmnm) group at the wobble position (U34) of certain tRNAs, forming tRNA-cmnm(5)s(2)U34. The chain is tRNA modification GTPase MnmE from Shewanella baltica (strain OS195).